Here is a 629-residue protein sequence, read N- to C-terminus: tRNA uridine 5-carboxymethylaminomethyl modification enzyme MnmG (629 aa).

FAD contacts are provided by residues Gly-13–Gly-18, Val-125, and Ser-180. Gly-273–Phe-287 contributes to the NAD(+) binding site. Gln-370 contacts FAD.

This sequence belongs to the MnmG family. As to quaternary structure, homodimer. Heterotetramer of two MnmE and two MnmG subunits. The cofactor is FAD.

The protein resides in the cytoplasm. Its function is as follows. NAD-binding protein involved in the addition of a carboxymethylaminomethyl (cmnm) group at the wobble position (U34) of certain tRNAs, forming tRNA-cmnm(5)s(2)U34. The chain is tRNA uridine 5-carboxymethylaminomethyl modification enzyme MnmG from Aliivibrio fischeri (strain ATCC 700601 / ES114) (Vibrio fischeri).